Here is a 460-residue protein sequence, read N- to C-terminus: Nitrilase and fragile histidine triad fusion protein NitFhit (460 aa).

In terms of domain architecture, CN hydrolase spans Ala-33 to Leu-279. Catalysis depends on residues Glu-72, Lys-142, and Cys-183. The 108-residue stretch at Asp-315–His-422 folds into the HIT domain. The Histidine triad motif motif lies at His-407–His-411. Catalysis depends on His-409, which acts as the Tele-AMP-histidine intermediate.

The protein in the N-terminal section; belongs to the UPF0012 family. As to quaternary structure, homotetramer. It depends on Mn(2+) as a cofactor.

It carries out the reaction P(1),P(3)-bis(5'-adenosyl) triphosphate + H2O = AMP + ADP + 2 H(+). Cleaves A-5'-PPP-5'A to yield AMP and ADP. This chain is Nitrilase and fragile histidine triad fusion protein NitFhit, found in Drosophila melanogaster (Fruit fly).